The following is a 176-amino-acid chain: Nucleoside triphosphate/diphosphate phosphatase (176 aa).

Residue arginine 23 is the Proton donor of the active site. Mg(2+) is bound by residues asparagine 87, aspartate 103, aspartate 105, aspartate 107, aspartate 120, and glutamate 123.

The protein belongs to the Ntdp family. Mg(2+) serves as cofactor.

The enzyme catalyses a ribonucleoside 5'-triphosphate + H2O = a ribonucleoside 5'-diphosphate + phosphate + H(+). It carries out the reaction a ribonucleoside 5'-diphosphate + H2O = a ribonucleoside 5'-phosphate + phosphate + H(+). In terms of biological role, has nucleoside phosphatase activity towards nucleoside triphosphates and nucleoside diphosphates. The polypeptide is Nucleoside triphosphate/diphosphate phosphatase (Bacillus cereus (strain B4264)).